The sequence spans 251 residues: Flap endonuclease Xni (251 aa).

Residue Asp104 participates in Mg(2+) binding. The 90-residue stretch at 160 to 249 (VQPQQLPDYW…IDGNLQQLRL (90 aa)) folds into the 5'-3' exonuclease domain. The K(+) site is built by Leu171, Ala172, Pro180, Val182, and Ile185. Positions 184-189 (GIGPKS) are interaction with DNA.

It belongs to the Xni family. Mg(2+) is required as a cofactor. K(+) serves as cofactor.

Its function is as follows. Has flap endonuclease activity. During DNA replication, flap endonucleases cleave the 5'-overhanging flap structure that is generated by displacement synthesis when DNA polymerase encounters the 5'-end of a downstream Okazaki fragment. This is Flap endonuclease Xni from Escherichia coli O17:K52:H18 (strain UMN026 / ExPEC).